Here is a 372-residue protein sequence, read N- to C-terminus: MFEFEITSDCINTGARTGIFHTPNGKVNTPKFMPVGTLATVKGISSKQLISTGSEMILSNTFHLHLQPGEKLVKASGGIHKFMNWPKPILTDSGGYQVFSLAKLNNISDEGVEFKNPRDGSHVFLSPEKVIKIQMDLGSDVAMAFDHCPPHTANENDIEDSLERTHSWLQKCVETHQKSNQALFGIVQGGKYPRLREYSAKYTSSFDLPGIAVGGVSVGEAVEEIHSVINYVPKFLPINKPRYLMGIGSLKEISLAVANGFDIFDCVLPTRLGRHGTAFFNDERLNLRNARFKNDFSPIDKTCKCETCKSYSRAYLHHLIRNDEILGLSLISLHNIAHLIRFTNAISTAIRDNCFTNDFAPWKTSSIAHHTW.

The Proton acceptor role is filled by Asp92. Substrate-binding positions include 92–96 (DSGGY), Asp146, Gln188, and Gly215. The segment at 246 to 252 (GIGSLKE) is RNA binding. Asp265 functions as the Nucleophile in the catalytic mechanism. The segment at 270-274 (TRLGR) is RNA binding; important for wobble base 34 recognition. Cys303, Cys305, Cys308, and His334 together coordinate Zn(2+).

Belongs to the queuine tRNA-ribosyltransferase family. Homodimer. Within each dimer, one monomer is responsible for RNA recognition and catalysis, while the other monomer binds to the replacement base PreQ1. The cofactor is Zn(2+).

It catalyses the reaction 7-aminomethyl-7-carbaguanine + guanosine(34) in tRNA = 7-aminomethyl-7-carbaguanosine(34) in tRNA + guanine. The protein operates within tRNA modification; tRNA-queuosine biosynthesis. Catalyzes the base-exchange of a guanine (G) residue with the queuine precursor 7-aminomethyl-7-deazaguanine (PreQ1) at position 34 (anticodon wobble position) in tRNAs with GU(N) anticodons (tRNA-Asp, -Asn, -His and -Tyr). Catalysis occurs through a double-displacement mechanism. The nucleophile active site attacks the C1' of nucleotide 34 to detach the guanine base from the RNA, forming a covalent enzyme-RNA intermediate. The proton acceptor active site deprotonates the incoming PreQ1, allowing a nucleophilic attack on the C1' of the ribose to form the product. After dissociation, two additional enzymatic reactions on the tRNA convert PreQ1 to queuine (Q), resulting in the hypermodified nucleoside queuosine (7-(((4,5-cis-dihydroxy-2-cyclopenten-1-yl)amino)methyl)-7-deazaguanosine). The polypeptide is Queuine tRNA-ribosyltransferase (Prochlorococcus marinus (strain MIT 9301)).